A 414-amino-acid chain; its full sequence is WD repeat-containing protein jip5 (414 aa).

WD repeat units follow at residues 9-48 (PLSA…SSDD), 73-112 (RHKG…VENK), 118-159 (AKDG…SNVS), 222-263 (VSSV…DQDE), and 319-356 (DETE…NDMD). Positions 39 to 65 (RLPSEESSDDDDGTASNSSARNGKGHI) are disordered. Residues 357–414 (VDMAGGKRMFGGDSDDSDDDNDSEDSEQEQRQPVEPQRKRKKNKGKGKRDIIAFADID) form a disordered region. The segment covering 369 to 383 (DSDDSDDDNDSEDSE) has biased composition (acidic residues). Positions 394 to 403 (RKRKKNKGKG) are enriched in basic residues.

It belongs to the WD repeat WDR55 family.

It is found in the nucleus. The protein resides in the nucleolus. This Aspergillus clavatus (strain ATCC 1007 / CBS 513.65 / DSM 816 / NCTC 3887 / NRRL 1 / QM 1276 / 107) protein is WD repeat-containing protein jip5 (jip5).